A 708-amino-acid chain; its full sequence is Leukotoxin translocation ATP-binding protein LktB (708 aa).

Residues 1–126 (MEANHQRNDL…ACYQGQLILV (126 aa)) enclose the Peptidase C39 domain. The ABC transmembrane type-1 domain maps to 155–437 (FLETLIVSIF…LAQLWQDFQQ (283 aa)). 5 helical membrane passes run 159-179 (LIVS…FQVV), 192-212 (LNII…LSGL), 270-290 (ALTS…MWYY), 296-316 (LVIL…SPIL), and 389-409 (VMVI…LSIG). The ABC transporter domain maps to 469 to 704 (ISFKNIRFRY…SNGLYSYLHQ (236 aa)). Residue 503–510 (GRSGSGKS) participates in ATP binding.

It belongs to the ABC transporter superfamily. Protein-1 exporter (TC 3.A.1.109) family. As to quaternary structure, homodimer.

It is found in the cell inner membrane. It carries out the reaction ATP + H2O + proteinSide 1 = ADP + phosphate + proteinSide 2.. Part of the ABC transporter complex LktBD involved in leukotoxin export. Transmembrane domains (TMD) form a pore in the inner membrane and the ATP-binding domain (NBD) is responsible for energy generation. This Mannheimia haemolytica (Pasteurella haemolytica) protein is Leukotoxin translocation ATP-binding protein LktB (lktB).